The primary structure comprises 664 residues: Intraflagellar transport protein 70B (664 aa).

7 TPR repeats span residues 11 to 44 (DGEF…SSRS), 45 to 78 (RAGL…HPEL), 153 to 186 (YDGQ…SGYQ), 188 to 220 (DLSY…GIRQ), 385 to 418 (LTEQ…YDET), 423 to 456 (IPVL…CNDH), and 458 to 491 (VWKL…NYDN). Residues 507–534 (YIMTSQNEEAEELMRKIEKEEEQLSYGD) adopt a coiled-coil conformation. The stretch at 543-576 (CIVNLVIGTLYCAKGNYDFGISRVIKSLEPYHKK) is one TPR 8 repeat.

This sequence belongs to the TTC30/dfy-1/fleer family. As to quaternary structure, interacts with the IFT B complex components IFT27, IFT46, IFT74, IFT52, IFT57, IFT80, IFT81 and IFT88. Interacts with KIF17.

Its subcellular location is the cell projection. The protein localises to the cilium. Required for polyglutamylation of axonemal tubulin. Plays a role in anterograde intraflagellar transport (IFT), the process by which cilia precursors are transported from the base of the cilium to the site of their incorporation at the tip. The polypeptide is Intraflagellar transport protein 70B (Ift70b) (Mus musculus (Mouse)).